The sequence spans 120 residues: NAD(P)H-quinone oxidoreductase subunit 3, chloroplastic (120 aa).

The next 3 helical transmembrane spans lie at I9 to G29, M64 to M84, and V88 to S108.

It belongs to the complex I subunit 3 family. NDH is composed of at least 16 different subunits, 5 of which are encoded in the nucleus.

Its subcellular location is the plastid. The protein resides in the chloroplast thylakoid membrane. It catalyses the reaction a plastoquinone + NADH + (n+1) H(+)(in) = a plastoquinol + NAD(+) + n H(+)(out). The catalysed reaction is a plastoquinone + NADPH + (n+1) H(+)(in) = a plastoquinol + NADP(+) + n H(+)(out). NDH shuttles electrons from NAD(P)H:plastoquinone, via FMN and iron-sulfur (Fe-S) centers, to quinones in the photosynthetic chain and possibly in a chloroplast respiratory chain. The immediate electron acceptor for the enzyme in this species is believed to be plastoquinone. Couples the redox reaction to proton translocation, and thus conserves the redox energy in a proton gradient. In Lotus japonicus (Lotus corniculatus var. japonicus), this protein is NAD(P)H-quinone oxidoreductase subunit 3, chloroplastic.